A 372-amino-acid polypeptide reads, in one-letter code: MWPFASVPAGAKCRLVETLPENMDFRSDHLTTFECFNEIITLAKKYIYIASFCCNPLSTTRGALIFDKLKEVSEKGIKIIVLLDERGKRNLGELQSHSPDINFITVNIDKKNNVGLLLGCFWVSDDERCYVGNASFTGGSIHTIKTLGVYSDYPPLATDLRRRFDTFKAFNSAKNSWLNLCSAACCLPVSTAYHIKNPIGGVFFTDSPEHLLGYSRDLDTDVVIDKLKSAKTSIDIEHLAIVPTTRVDGNSYYWPDIYNSIIEAAINRGVKIRLLVGNWDKNDVYSMATARSLDALCVQNDLSVKVFTIQNNTKLLIVDDEYVHITSANFDGTHYQNHGFVSFNSIDKQLVSEAKKIFERDWVSSHSKSLKI.

The short motif at 153–156 (YPPL) is the YPPL element. S-palmitoyl cysteine; by host attachment occurs at residues cysteine 185 and cysteine 186. Residues 307–334 (FTIQNNTKLLIVDDEYVHITSANFDGTH) enclose the PLD phosphodiesterase domain.

Belongs to the orthopoxvirus OPG057 family. Interacts with protein OPG190. Palmitoylated. Attachment of the palmitate moiety is essential for correct intracellular targeting and protein function.

It localises to the virion membrane. The protein resides in the host Golgi apparatus. It is found in the host trans-Golgi network. The protein localises to the host endoplasmic reticulum membrane. The enzyme catalyses a 1,2-diacyl-sn-glycero-3-phosphocholine + H2O = a 1,2-diacyl-sn-glycero-3-phosphate + choline + H(+). Major envelope protein that plays a role in the biogenesis of the viral double membrane and in egress of virus from the host cell. Produces the wrapped form of virus that is required for cell-to-cell spread. Acts as a lipase with broad specificity including phospholipase C, phospholipase A, and triacylglycerol lipase activities. This Cynomys gunnisoni (Gunnison's prairie dog) protein is Envelope phospholipase OPG057 (OPG057).